The following is a 754-amino-acid chain: FAD-dependent monooxygenase ntnA (754 aa).

The chain crosses the membrane as a helical span at residues 3–23; sequence IPFKVLIIGGGVAGLTLAIML. The FAD site is built by E34, G48, and R109. Y218 is an active-site residue. The FAD site is built by D311 and A324. 4 helical membrane passes run 446-466, 486-506, 536-556, and 563-583; these read PLATFSWVTVLILAASSPWLA, AEVLELYISILSVSISGMWVI, ILPIYICFYILSSQSVVYYYM, and LGVAKALLPALLVVYTVSAVC. A glycan (N-linked (GlcNAc...) asparagine) is linked at N586. A helical membrane pass occupies residues 595–615; sequence SWWFTADFAFPVVAYLSGMFL. N616 carries an N-linked (GlcNAc...) asparagine glycan. 2 helical membrane passes run 644 to 664 and 679 to 697; these read IAFVGFVAYAALASQYGTTIL and LASLTTVTTLWCLYSAWEL. The N-linked (GlcNAc...) asparagine glycan is linked to N701. A helical transmembrane segment spans residues 712 to 732; that stretch reads LTILSSTIFGGPAATLAGTFI.

It belongs to the paxM FAD-dependent monooxygenase family. The cofactor is FAD.

The protein resides in the membrane. It functions in the pathway secondary metabolite biosynthesis; terpenoid biosynthesis. In terms of biological role, FAD-dependent monooxygenase; part of the gene cluster that mediates the biosynthesis of the meroterpenoids nectripenoids A and B, as well as cochliquninone D and isocochliquninone E. The pathway probably begins with the HR-PKS ntnH that catalyzes two chain-extension steps to form a reduced triketide, which then primes the SAT domain in the NR-PKS ntnG to initiate three more cycles of extension to give a linear hexaketide corresponding to the polyketide part of nectripenoids. The FAD-dependent monooxygenase ntnJ then performs an oxidative decarboxylation at C11 of the ntnH/ntnG product, via an electrophilic aromatic hydroxylation with concomitant ipso-decarboxylation. The membrane-bound polyprenyl transferase ntnF then introduces a farnesyl group before the FAD-dependent monooxygenase ntnK functions as the first epoxidase on terminal C12'-C13' olefin, followed by a second epoxidation on C7'-C8' catalyzed by ntnA. The terpene cyclase/mutase ntnI then initiates the sequential tricyclic ring formation through protonation of the terminal epoxide and catalyzes the regioselective and stereoselective 6/6/6-tricyclic ring formation. The cytochrome P450 monooxygenase ntnM may then hydroxylate C1'. This Nectria sp protein is FAD-dependent monooxygenase ntnA.